A 249-amino-acid chain; its full sequence is RNA polymerase sigma factor SigI3 (249 aa).

Positions 60 to 73 (EEFSIGLAAFNEAI) match the Polymerase core binding motif. Residues 199 to 218 (MKEVLSRIKVNHKTIQRNRK) constitute a DNA-binding region (H-T-H motif).

The protein belongs to the sigma-70 factor family. SigI subfamily. In terms of assembly, interacts with RsgI3.

It localises to the cytoplasm. Negatively regulated by the anti-sigma-I factor RsgI3. Binding of the polysaccharide substrate to RsgI3 may lead to the release and activation of SigI3. Functionally, sigma factors are initiation factors that promote the attachment of RNA polymerase to specific initiation sites and are then released. This sigma factor is involved in regulation of cellulosomal genes via an external polysaccharide-sensing mechanism. Recognizes the predicted promoters associated with sigI3 itself, pl11, ce12 and cipA. This is RNA polymerase sigma factor SigI3 from Acetivibrio thermocellus (strain ATCC 27405 / DSM 1237 / JCM 9322 / NBRC 103400 / NCIMB 10682 / NRRL B-4536 / VPI 7372) (Clostridium thermocellum).